The sequence spans 196 residues: ATP-dependent Clp protease proteolytic subunit (196 aa).

Ser101 serves as the catalytic Nucleophile. His126 is an active-site residue.

Belongs to the peptidase S14 family. As to quaternary structure, component of the chloroplastic Clp protease core complex.

The protein resides in the plastid. It localises to the chloroplast stroma. The catalysed reaction is Hydrolysis of proteins to small peptides in the presence of ATP and magnesium. alpha-casein is the usual test substrate. In the absence of ATP, only oligopeptides shorter than five residues are hydrolyzed (such as succinyl-Leu-Tyr-|-NHMec, and Leu-Tyr-Leu-|-Tyr-Trp, in which cleavage of the -Tyr-|-Leu- and -Tyr-|-Trp bonds also occurs).. In terms of biological role, cleaves peptides in various proteins in a process that requires ATP hydrolysis. Has a chymotrypsin-like activity. Plays a major role in the degradation of misfolded proteins. The chain is ATP-dependent Clp protease proteolytic subunit from Helianthus annuus (Common sunflower).